Consider the following 144-residue polypeptide: Small ribosomal subunit protein bS6 (144 aa).

Residues 95-144 are disordered; it reads PVTTPSPMMQDDKSKPDENSRGTAAPTVNVADDSASGAQVVAAEENDTQS. Over residues 104–114 the composition is skewed to basic and acidic residues; that stretch reads QDDKSKPDENS.

It belongs to the bacterial ribosomal protein bS6 family.

Its function is as follows. Binds together with bS18 to 16S ribosomal RNA. The chain is Small ribosomal subunit protein bS6 from Nitrosomonas eutropha (strain DSM 101675 / C91 / Nm57).